Consider the following 367-residue polypeptide: tRNA-specific 2-thiouridylase MnmA (367 aa).

Residues 12 to 19 (GMSGGVDS) and Met-38 contribute to the ATP site. The interval 98–100 (NPD) is interaction with target base in tRNA. The Nucleophile role is filled by Cys-103. Cys-103 and Cys-200 are disulfide-bonded. Gly-128 is an ATP binding site. The interval 150–152 (KDQ) is interaction with tRNA. The Cysteine persulfide intermediate role is filled by Cys-200. The segment at 312 to 313 (RY) is interaction with tRNA.

It belongs to the MnmA/TRMU family. In terms of assembly, interacts with TusE.

The protein localises to the cytoplasm. The catalysed reaction is S-sulfanyl-L-cysteinyl-[protein] + uridine(34) in tRNA + AH2 + ATP = 2-thiouridine(34) in tRNA + L-cysteinyl-[protein] + A + AMP + diphosphate + H(+). In terms of biological role, catalyzes the 2-thiolation of uridine at the wobble position (U34) of tRNA(Lys), tRNA(Glu) and tRNA(Gln), leading to the formation of s(2)U34, the first step of tRNA-mnm(5)s(2)U34 synthesis. Sulfur is provided by IscS, via a sulfur-relay system. Binds ATP and its substrate tRNAs. In Proteus mirabilis (strain HI4320), this protein is tRNA-specific 2-thiouridylase MnmA.